A 215-amino-acid polypeptide reads, in one-letter code: 7-methyl-GTP pyrophosphatase (215 aa).

Asp-79 functions as the Proton acceptor in the catalytic mechanism.

It belongs to the Maf family. YceF subfamily. A divalent metal cation serves as cofactor.

The protein resides in the cytoplasm. It catalyses the reaction N(7)-methyl-GTP + H2O = N(7)-methyl-GMP + diphosphate + H(+). Nucleoside triphosphate pyrophosphatase that hydrolyzes 7-methyl-GTP (m(7)GTP). May have a dual role in cell division arrest and in preventing the incorporation of modified nucleotides into cellular nucleic acids. The polypeptide is 7-methyl-GTP pyrophosphatase (Burkholderia thailandensis (strain ATCC 700388 / DSM 13276 / CCUG 48851 / CIP 106301 / E264)).